The chain runs to 343 residues: Fructose-1,6-bisphosphatase class 1 (343 aa).

Residues E90, D109, L111, and D112 each coordinate Mg(2+). Residues 112 to 115 and N199 each bind substrate; that span reads DGSS. Mg(2+) is bound at residue E271.

The protein belongs to the FBPase class 1 family. Homotetramer. The cofactor is Mg(2+).

The protein localises to the cytoplasm. It carries out the reaction beta-D-fructose 1,6-bisphosphate + H2O = beta-D-fructose 6-phosphate + phosphate. It participates in carbohydrate biosynthesis; Calvin cycle. The polypeptide is Fructose-1,6-bisphosphatase class 1 (Rhodopseudomonas palustris (strain HaA2)).